A 64-amino-acid chain; its full sequence is Relaxin (64 aa).

Disulfide bonds link Cys-11/Cys-51, Cys-23/Cys-64, and Cys-50/Cys-55.

Belongs to the insulin family. In terms of assembly, heterodimer of a B chain and an A chain linked by two disulfide bonds.

Its subcellular location is the secreted. The chain is Relaxin from Leucoraja erinaceus (Little skate).